The sequence spans 130 residues: D-ribose pyranase (130 aa).

The active-site Proton donor is H20. Substrate-binding positions include D28, H97, and 119–121 (YSN).

The protein belongs to the RbsD / FucU family. RbsD subfamily. As to quaternary structure, homodecamer.

The protein resides in the cytoplasm. The enzyme catalyses beta-D-ribopyranose = beta-D-ribofuranose. It functions in the pathway carbohydrate metabolism; D-ribose degradation; D-ribose 5-phosphate from beta-D-ribopyranose: step 1/2. Its function is as follows. Catalyzes the interconversion of beta-pyran and beta-furan forms of D-ribose. In Lacticaseibacillus casei (strain BL23) (Lactobacillus casei), this protein is D-ribose pyranase.